A 369-amino-acid chain; its full sequence is Holliday junction branch migration complex subunit RuvB (369 aa).

A disordered region spans residues 1-21; sequence MHKNENNRLLGSVSLPDDPDR. The interval 1–184 is large ATPase domain (RuvB-L); it reads MHKNENNRLL…FGIPIRLNFY (184 aa). Residues Leu-23, Arg-24, Gly-65, Lys-68, Thr-69, Thr-70, 131–133, Arg-174, Tyr-184, and Arg-221 each bind ATP; that span reads EDY. Residue Thr-69 coordinates Mg(2+). Positions 185–255 are small ATPAse domain (RuvB-S); the sequence is TIEELEYIVK…IADTALSRLE (71 aa). Residues 258-369 form a head domain (RuvB-H) region; the sequence is HLGLDPLDRN…QKHLWEKDYD (112 aa). Arg-294, Arg-313, and Arg-318 together coordinate DNA.

Belongs to the RuvB family. In terms of assembly, homohexamer. Forms an RuvA(8)-RuvB(12)-Holliday junction (HJ) complex. HJ DNA is sandwiched between 2 RuvA tetramers; dsDNA enters through RuvA and exits via RuvB. An RuvB hexamer assembles on each DNA strand where it exits the tetramer. Each RuvB hexamer is contacted by two RuvA subunits (via domain III) on 2 adjacent RuvB subunits; this complex drives branch migration. In the full resolvosome a probable DNA-RuvA(4)-RuvB(12)-RuvC(2) complex forms which resolves the HJ.

The protein resides in the cytoplasm. It carries out the reaction ATP + H2O = ADP + phosphate + H(+). Functionally, the RuvA-RuvB-RuvC complex processes Holliday junction (HJ) DNA during genetic recombination and DNA repair, while the RuvA-RuvB complex plays an important role in the rescue of blocked DNA replication forks via replication fork reversal (RFR). RuvA specifically binds to HJ cruciform DNA, conferring on it an open structure. The RuvB hexamer acts as an ATP-dependent pump, pulling dsDNA into and through the RuvAB complex. RuvB forms 2 homohexamers on either side of HJ DNA bound by 1 or 2 RuvA tetramers; 4 subunits per hexamer contact DNA at a time. Coordinated motions by a converter formed by DNA-disengaged RuvB subunits stimulates ATP hydrolysis and nucleotide exchange. Immobilization of the converter enables RuvB to convert the ATP-contained energy into a lever motion, pulling 2 nucleotides of DNA out of the RuvA tetramer per ATP hydrolyzed, thus driving DNA branch migration. The RuvB motors rotate together with the DNA substrate, which together with the progressing nucleotide cycle form the mechanistic basis for DNA recombination by continuous HJ branch migration. Branch migration allows RuvC to scan DNA until it finds its consensus sequence, where it cleaves and resolves cruciform DNA. The chain is Holliday junction branch migration complex subunit RuvB from Bartonella bacilliformis (strain ATCC 35685 / KC583 / Herrer 020/F12,63).